The chain runs to 800 residues: MSSSPVNVKKLKVSELKEELKKRRLSDKGLKADLMDRLQAALDNEAGGRPAMEPGNGSLDLGGDAAGRSGAGLEQEAAAGAEDDEEEEGIAALDGDQMELGEENGAAGAADAGAMEEEEAASEDENGDDQGFQEGEDELGDEEEGAGDENGHGEQQSQPPAAAAQQQPSQQRGAGKEAAGKSSGPTSLFAVTVAPPGARQGQQQAGGDGKTEQKGGDKKRGVKRPREDHGRGYFEYIEENKYSRAKSPQPPVEEEDEHFDDTVVCLDTYNCDLHFKISRDRLSASSLTMESFAFLWAGGRASYGVSKGKVCFEMKVTEKIPVRHLYTKDIDIHEVRIGWSLTTSGMLLGEEEFSYGYSLKGIKTCNCETEDYGEKFDENDVITCFANFETDEVELSYAKNGQDLGVAFKISKEVLADRPLFPHVLCHNCAVEFNFGQKEKPYFPIPEDCTFIQNVPLEDRVRGPKGPEEKKDCEVVMMIGLPGAGKTTWVTKHAAENPGKYNILGTNTIMDKMMVAGFKKQMADTGKLNTLLQRAPQCLGKFIEIAARKKRNFILDQTNVSAAAQRRKMCLFAGFQRKAVVVCPKDEDYKQRTQKKAEVEGKDLPEHAVLKMKGNFTLPEVAECFDEITYVELQKEEAQKLLEQYKEESKKALPPEKKQNTGSKKSNKNKSGKNQFNRGGGHRGRGGFNMRGGNFRGGAPGNRGGYNRRGNMPQRGGGGGSGGIGYPYPRGPVFPGRGGYSNRGNYNRGGMPNRGNYNQNFRGRGNNRGYKNQSQGYNQWQQGQFWGQKPWSQHYHQGYY.

Serine 2 is modified (N-acetylserine). Phosphoserine is present on serine 4. Residues 8–42 (VKKLKVSELKEELKKRRLSDKGLKADLMDRLQAAL) form the SAP domain. Lysine 17 and lysine 21 each carry N6-acetyllysine. A disordered region spans residues 41–257 (ALDNEAGGRP…PQPPVEEEDE (217 aa)). Serine 58 is modified (phosphoserine). 2 stretches are compositionally biased toward low complexity: residues 71 to 80 (AGLEQEAAAG) and 103 to 113 (ENGAAGAADAG). 2 stretches are compositionally biased toward acidic residues: residues 114–128 (AMEE…ENGD) and 134–147 (EGED…EGAG). Low complexity predominate over residues 153 to 173 (GEQQSQPPAAAAQQQPSQQRG). Lysine 181 bears the N6-acetyllysine mark. Serine 182 is modified (ADP-ribosylserine). A compositionally biased stretch (low complexity) spans 194–205 (APPGARQGQQQA). Residues 209–242 (GKTEQKGGDKKRGVKRPREDHGRGYFEYIEENKY) are compositionally biased toward basic and acidic residues. Position 231 is a citrulline (arginine 231). An N6-acetyllysine; alternate modification is found at lysine 241. Residue lysine 241 forms a Glycyl lysine isopeptide (Lys-Gly) (interchain with G-Cter in SUMO1); alternate linkage. Residue lysine 241 forms a Glycyl lysine isopeptide (Lys-Gly) (interchain with G-Cter in SUMO2); alternate linkage. Position 242 is a phosphotyrosine (tyrosine 242). Residues serine 243 and serine 247 each carry the phosphoserine modification. A B30.2/SPRY domain is found at 244 to 440 (RAKSPQPPVE…VEFNFGQKEK (197 aa)). The residue at position 262 (threonine 262) is a Phosphothreonine. N6-acetyllysine is present on lysine 328. Residues 464 to 648 (PKGPEEKKDC…QKLLEQYKEE (185 aa)) are ATPase domain. A Glycyl lysine isopeptide (Lys-Gly) (interchain with G-Cter in SUMO2) cross-link involves residue lysine 471. Position 480-487 (480-487 (GLPGAGKT)) interacts with ATP. 2 positions are modified to N6-acetyllysine; alternate: lysine 492 and lysine 500. Glycyl lysine isopeptide (Lys-Gly) (interchain with G-Cter in SUMO2); alternate cross-links involve residues lysine 492 and lysine 500. Threonine 508 is modified (phosphothreonine). Lysine 512 is covalently cross-linked (Glycyl lysine isopeptide (Lys-Gly) (interchain with G-Cter in SUMO2)). Lysine 527 is modified (N6-acetyllysine). Lysine 541 bears the N6-acetyllysine; alternate mark. A Glycyl lysine isopeptide (Lys-Gly) (interchain with G-Cter in SUMO2); alternate cross-link involves residue lysine 541. Lysine 550 participates in a covalent cross-link: Glycyl lysine isopeptide (Lys-Gly) (interchain with G-Cter in SUMO2). A Phosphothreonine modification is found at threonine 558. Glycyl lysine isopeptide (Lys-Gly) (interchain with G-Cter in SUMO2) cross-links involve residues lysine 585 and lysine 602. The segment at 587–602 (EDYKQRTQKKAEVEGK) is actin-binding. Residue lysine 611 is modified to N6-acetyllysine; alternate. Residue lysine 611 forms a Glycyl lysine isopeptide (Lys-Gly) (interchain with G-Cter in SUMO2); alternate linkage. The stretch at 626–653 (DEITYVELQKEEAQKLLEQYKEESKKAL) forms a coiled coil. Glycyl lysine isopeptide (Lys-Gly) (interchain with G-Cter in SUMO2) cross-links involve residues lysine 640 and lysine 646. Residues 647-659 (EESKKALPPEKKQ) show a composition bias toward basic and acidic residues. The disordered stretch occupies residues 647–729 (EESKKALPPE…GSGGIGYPYP (83 aa)). Residue arginine 678 is modified to Omega-N-methylarginine. A compositionally biased stretch (gly residues) spans 686-704 (GGFNMRGGNFRGGAPGNRG). The interval 690-715 (MRGGNFRGGAPGNRGGYNRRGNMPQR) is RNA-binding RGG-box. Arginine 691, arginine 696, and arginine 703 each carry asymmetric dimethylarginine. Asymmetric dimethylarginine; alternate is present on residues arginine 709 and arginine 715. 2 positions are modified to omega-N-methylarginine; alternate: arginine 709 and arginine 715. Gly residues predominate over residues 715-725 (RGGGGGSGGIG). An asymmetric dimethylarginine mark is found at arginine 730 and arginine 737. Positions 745–774 (NYNRGGMPNRGNYNQNFRGRGNNRGYKNQS) are disordered. An N6-acetyllysine; alternate modification is found at lysine 789. Residue lysine 789 forms a Glycyl lysine isopeptide (Lys-Gly) (interchain with G-Cter in SUMO2); alternate linkage.

In terms of assembly, oligomer (via ATPase domain and RNA-binding RGG-box region); oligomerization occurs upon ATP-binding in a chromatin-associated RNAs (caRNAs)- and transcription-dependent manner and is required for chromatin decompaction. ATP hydrolysis is required to cycle from an oligomeric to monomeric state to compact chromatin. Component of the coding region determinant (CRD)-mediated complex, composed of DHX9, HNRNPU, IGF2BP1, SYNCRIP and YBX1. Identified in the spliceosome C complex. Identified in a IGF2BP1-dependent mRNP granule complex containing untranslated mRNAs. Associates with heterogeneous nuclear ribonucleoprotein (hnRNP) particles. Associates (via middle region) with the C-terminal domain (CTD) RNA polymerase II (Pol II) holoenzyme; this association occurs in a RNA-independent manner. Associates (via middle region) with the core-TFIIH basal transcription factor complex; this association inhibits the CTD phosphorylation of RNA polymerase II holoenzyme by down-regulating TFIIH kinase activity. Associates with the telomerase holoenzyme complex. Associates with spindle microtubules (MTs) in a TPX2-dependent manner. Interacts (via C-terminus) with actin; this interaction is direct and mediates association with the phosphorylated CTD of RNA polymerase II and is disrupted in presence of the long non-coding H19 RNA. Interacts with AURKA. Interacts (via C-terminus) with CBX5; this interaction is, at least in part, RNA-dependent. Interacts with CR2. Interacts with CRY1. Interacts (via C-terminus) with EP300; this interaction enhances DNA-binding to nuclear scaffold/matrix attachment region (S/MAR) elements. Interacts with ERBB4. Interacts with GEMIN5. Interacts with IGF2BP1. Interacts with IGF2BP2 and IGF2BP3. Interacts with NCL; this interaction occurs during mitosis. Interacts (via C-terminus) with NR3C1 (via C-terminus). Interacts with PLK1; this interaction induces phosphorylation of HNRNPU at Ser-58 in mitosis. Interacts with POU3F4. Interacts with SMARCA4; this interaction occurs in embryonic stem cells and stimulates global Pol II-mediated transcription. Interacts (via C-terminus) with TOP2A; this interaction protects the topoisomerase TOP2A from degradation and positively regulates the relaxation of supercoiled DNA by TOP2A in a RNA-dependent manner. Interacts with TPX2; this interaction recruits HNRNPU to spindle microtubules (MTs). Interacts with UBQLN2. Interacts (via RNA-binding RGG-box region) with ZBTB7B; the interaction facilitates the recruitment of long non-coding RNA Blnc1 by ZBTB7B. Interacts with ERCC6. In terms of processing, cleaved at Asp-94 by CASP3 during T-cell apoptosis, resulting in a loss of DNA- and chromatin-binding activities. Post-translationally, extensively phosphorylated. Phosphorylated on Ser-58 by PLK1 and dephosphorylated by protein phosphatase 2A (PP2A) in mitosis. Arg-709 and Arg-715 are dimethylated, probably to asymmetric dimethylarginine. In terms of processing, citrullinated by PADI4.

The protein resides in the nucleus. Its subcellular location is the nucleus matrix. It localises to the chromosome. The protein localises to the nucleus speckle. It is found in the cytoplasm. The protein resides in the cytoskeleton. Its subcellular location is the microtubule organizing center. It localises to the centrosome. The protein localises to the centromere. It is found in the kinetochore. The protein resides in the spindle. Its subcellular location is the spindle pole. It localises to the midbody. The protein localises to the cell surface. It is found in the cytoplasmic granule. In terms of biological role, DNA- and RNA-binding protein involved in several cellular processes such as nuclear chromatin organization, telomere-length regulation, transcription, mRNA alternative splicing and stability, Xist-mediated transcriptional silencing and mitotic cell progression. Plays a role in the regulation of interphase large-scale gene-rich chromatin organization through chromatin-associated RNAs (caRNAs) in a transcription-dependent manner, and thereby maintains genomic stability. Required for the localization of the long non-coding Xist RNA on the inactive chromosome X (Xi) and the subsequent initiation and maintenance of X-linked transcriptional gene silencing during X-inactivation. Plays a role as a RNA polymerase II (Pol II) holoenzyme transcription regulator. Promotes transcription initiation by direct association with the core-TFIIH basal transcription factor complex for the assembly of a functional pre-initiation complex with Pol II in a actin-dependent manner. Blocks Pol II transcription elongation activity by inhibiting the C-terminal domain (CTD) phosphorylation of Pol II and dissociates from Pol II pre-initiation complex prior to productive transcription elongation. Positively regulates CBX5-induced transcriptional gene silencing and retention of CBX5 in the nucleus. Negatively regulates glucocorticoid-mediated transcriptional activation. Key regulator of transcription initiation and elongation in embryonic stem cells upon leukemia inhibitory factor (LIF) signaling. Involved in the long non-coding RNA H19-mediated Pol II transcriptional repression. Participates in the circadian regulation of the core clock component BMAL1 transcription. Plays a role in the regulation of telomere length. Plays a role as a global pre-mRNA alternative splicing modulator by regulating U2 small nuclear ribonucleoprotein (snRNP) biogenesis. Plays a role in mRNA stability. Component of the CRD-mediated complex that promotes MYC mRNA stabilization. Enhances the expression of specific genes, such as tumor necrosis factor TNFA, by regulating mRNA stability, possibly through binding to the 3'-untranslated region (UTR). Plays a role in mitotic cell cycle regulation. Involved in the formation of stable mitotic spindle microtubules (MTs) attachment to kinetochore, spindle organization and chromosome congression. Phosphorylation at Ser-58 by PLK1 is required for chromosome alignement and segregation and progression through mitosis. Also contributes to the targeting of AURKA to mitotic spindle MTs. Binds to double- and single-stranded DNA and RNA, poly(A), poly(C) and poly(G) oligoribonucleotides. Binds to chromatin-associated RNAs (caRNAs). Associates with chromatin to scaffold/matrix attachment region (S/MAR) elements in a chromatin-associated RNAs (caRNAs)-dependent manner. Binds (via RNA-binding RGG-box region) to the long non-coding Xist RNA; this binding is direct and bridges the Xist RNA and the inactive chromosome X (Xi). Binds the long non-coding H19 RNA. Binds to SMN1/2 pre-mRNAs at G/U-rich regions. Binds to small nuclear RNAs (snRNAs). Binds to the 3'-UTR of TNFA mRNA. Also negatively regulates embryonic stem cell differentiation upon LIF signaling. Required for embryonic development. Binds to brown fat long non-coding RNA 1 (Blnc1); facilitates the recruitment of Blnc1 by ZBTB7B required to drive brown and beige fat development and thermogenesis. This chain is Heterogeneous nuclear ribonucleoprotein U, found in Mus musculus (Mouse).